Consider the following 468-residue polypeptide: 3-isopropylmalate dehydratase large subunit 2 (468 aa).

[4Fe-4S] cluster is bound by residues cysteine 349, cysteine 409, and cysteine 412.

The protein belongs to the aconitase/IPM isomerase family. LeuC type 1 subfamily. Heterodimer of LeuC and LeuD. Requires [4Fe-4S] cluster as cofactor.

It carries out the reaction (2R,3S)-3-isopropylmalate = (2S)-2-isopropylmalate. It functions in the pathway amino-acid biosynthesis; L-leucine biosynthesis; L-leucine from 3-methyl-2-oxobutanoate: step 2/4. Functionally, catalyzes the isomerization between 2-isopropylmalate and 3-isopropylmalate, via the formation of 2-isopropylmaleate. This is 3-isopropylmalate dehydratase large subunit 2 from Bradyrhizobium diazoefficiens (strain JCM 10833 / BCRC 13528 / IAM 13628 / NBRC 14792 / USDA 110).